A 199-amino-acid chain; its full sequence is Fe/S biogenesis protein NfuA (199 aa).

The [4Fe-4S] cluster site is built by Cys-151 and Cys-154.

This sequence belongs to the NfuA family. As to quaternary structure, homodimer. The cofactor is [4Fe-4S] cluster.

Involved in iron-sulfur cluster biogenesis. Binds a 4Fe-4S cluster, can transfer this cluster to apoproteins, and thereby intervenes in the maturation of Fe/S proteins. Could also act as a scaffold/chaperone for damaged Fe/S proteins. In Xanthomonas axonopodis pv. citri (strain 306), this protein is Fe/S biogenesis protein NfuA.